The following is a 484-amino-acid chain: Poly(A) RNA polymerase GLD2 (484 aa).

Phosphoserine is present on residues Ser62 and Ser69. The Nuclear localization signal signature appears at 76-92 (KRLSDEKNLPLDGKRQR). Ser95 bears the Phosphoserine mark. Positions 213 and 215 each coordinate Mg(2+). The region spanning 386 to 440 (NLGDLLLGFLKYYATEFDWNSQMISVREAKAIPRPDGIEWRNKYICVEEPFDGTN) is the PAP-associated domain.

The protein belongs to the DNA polymerase type-B-like family. GLD2 subfamily. In terms of assembly, interacts with CPEB1, CPEB2, CPSF1 and PABPC1. Interacts with QKI isoform QKI7; promoting recruitment to miRNA miR-122 and miR-122 stabilization. Requires Mg(2+) as cofactor. The cofactor is Mn(2+).

It is found in the cytoplasm. The protein localises to the nucleus. It carries out the reaction RNA(n) + ATP = RNA(n)-3'-adenine ribonucleotide + diphosphate. In terms of biological role, cytoplasmic poly(A) RNA polymerase that adds successive AMP monomers to the 3'-end of specific RNAs, forming a poly(A) tail. In contrast to the canonical nuclear poly(A) RNA polymerase, it only adds poly(A) to selected cytoplasmic mRNAs. Does not play a role in replication-dependent histone mRNA degradation. Adds a single nucleotide to the 3' end of specific miRNAs, monoadenylation stabilizes and prolongs the activity of some but not all miRNAs. The protein is Poly(A) RNA polymerase GLD2 of Bos taurus (Bovine).